Consider the following 165-residue polypeptide: Fatty acid-binding protein homolog 3 (165 aa).

Residues 1–19 (MNLYLTLFSFCFLAIMAEA) form the signal peptide.

Belongs to the calycin superfamily. Fatty-acid binding protein (FABP) family. Expressed in presumptive hypodermal cells by the comma stage and in posterior body wall muscle cells by the two-fold stage. From L1 to adult stages, expression continues in body wall muscle cells adjacent to the pseudocoelom, while hypodermal expression is extinguished.

The protein resides in the secreted. Its function is as follows. May play a role in sequestering potentially toxic fatty acids and their peroxidation products, or it may be involved in the maintenance of the impermeable lipid layer of the eggshell. The polypeptide is Fatty acid-binding protein homolog 3 (lbp-3) (Caenorhabditis elegans).